The following is a 465-amino-acid chain: Methylenetetrahydrofolate--tRNA-(uracil-5-)-methyltransferase TrmFO (465 aa).

11-16 is an FAD binding site; that stretch reads GGGLAG.

This sequence belongs to the MnmG family. TrmFO subfamily. Requires FAD as cofactor.

The protein resides in the cytoplasm. The catalysed reaction is uridine(54) in tRNA + (6R)-5,10-methylene-5,6,7,8-tetrahydrofolate + NADH + H(+) = 5-methyluridine(54) in tRNA + (6S)-5,6,7,8-tetrahydrofolate + NAD(+). It carries out the reaction uridine(54) in tRNA + (6R)-5,10-methylene-5,6,7,8-tetrahydrofolate + NADPH + H(+) = 5-methyluridine(54) in tRNA + (6S)-5,6,7,8-tetrahydrofolate + NADP(+). In terms of biological role, catalyzes the folate-dependent formation of 5-methyl-uridine at position 54 (M-5-U54) in all tRNAs. The chain is Methylenetetrahydrofolate--tRNA-(uracil-5-)-methyltransferase TrmFO from Acaryochloris marina (strain MBIC 11017).